Consider the following 161-residue polypeptide: Transcription antitermination protein NusB (161 aa).

It belongs to the NusB family.

In terms of biological role, involved in transcription antitermination. Required for transcription of ribosomal RNA (rRNA) genes. Binds specifically to the boxA antiterminator sequence of the ribosomal RNA (rrn) operons. This Syntrophus aciditrophicus (strain SB) protein is Transcription antitermination protein NusB.